Here is a 162-residue protein sequence, read N- to C-terminus: 2-C-methyl-D-erythritol 2,4-cyclodiphosphate synthase (162 aa).

2 residues coordinate a divalent metal cation: Asp-9 and His-11. Residues 9–11 and 37–38 each bind 4-CDP-2-C-methyl-D-erythritol 2-phosphate; these read DFH and HS. An a divalent metal cation-binding site is contributed by His-45. Residues 59-61, 64-68, 135-138, and Arg-145 each bind 4-CDP-2-C-methyl-D-erythritol 2-phosphate; these read DIG, FPDTD, and TTSE.

Belongs to the IspF family. In terms of assembly, homotrimer. A divalent metal cation is required as a cofactor.

The catalysed reaction is 4-CDP-2-C-methyl-D-erythritol 2-phosphate = 2-C-methyl-D-erythritol 2,4-cyclic diphosphate + CMP. The protein operates within isoprenoid biosynthesis; isopentenyl diphosphate biosynthesis via DXP pathway; isopentenyl diphosphate from 1-deoxy-D-xylulose 5-phosphate: step 4/6. Functionally, involved in the biosynthesis of isopentenyl diphosphate (IPP) and dimethylallyl diphosphate (DMAPP), two major building blocks of isoprenoid compounds. Catalyzes the conversion of 4-diphosphocytidyl-2-C-methyl-D-erythritol 2-phosphate (CDP-ME2P) to 2-C-methyl-D-erythritol 2,4-cyclodiphosphate (ME-CPP) with a corresponding release of cytidine 5-monophosphate (CMP). In Leptospira biflexa serovar Patoc (strain Patoc 1 / Ames), this protein is 2-C-methyl-D-erythritol 2,4-cyclodiphosphate synthase.